The chain runs to 523 residues: UvrABC system protein C (523 aa).

Residues 15-93 (HLPGCYLFKD…IKKHWPRYNI (79 aa)) form the GIY-YIG domain. Positions 197-232 (RELIESMETEMKEMAAKQMFEQAMELRDEIAALEYL) constitute a UVR domain.

It belongs to the UvrC family. In terms of assembly, interacts with UvrB in an incision complex.

Its subcellular location is the cytoplasm. The UvrABC repair system catalyzes the recognition and processing of DNA lesions. UvrC both incises the 5' and 3' sides of the lesion. The N-terminal half is responsible for the 3' incision and the C-terminal half is responsible for the 5' incision. In Methanosarcina mazei (strain ATCC BAA-159 / DSM 3647 / Goe1 / Go1 / JCM 11833 / OCM 88) (Methanosarcina frisia), this protein is UvrABC system protein C.